The primary structure comprises 144 residues: Maximins 6/H10 (144 aa).

Positions 1 to 18 (MNFKYIVAVSFLIASAYA) are cleaved as a signal peptide. Positions 19–43 (RSVKNDEQSLSQRDVLDEESLREIR) are excised as a propeptide. Residue Asn70 is modified to Asparagine amide. A propeptide spanning residues 74 to 123 (TAEDHEVMKRLEAVMRDLDSLDHPEEASERETRGFNQEEIANRFTKKEKR) is cleaved from the precursor. Residue Leu143 is modified to Leucine amide.

The protein belongs to the bombinin family. In terms of tissue distribution, expressed by the skin glands.

The protein localises to the secreted. Maximin-6 shows antimicrobial activity against bacteria and against the fungus C.albicans. It has little hemolytic activity. Its function is as follows. Maximin-H10 shows antimicrobial activity against bacteria and against the fungus C.albicans. Shows strong hemolytic activity. The chain is Maximins 6/H10 from Bombina maxima (Giant fire-bellied toad).